The sequence spans 84 residues: Inactive transposase YbfQ (84 aa).

The sequence is that of Inactive transposase YbfQ (ybfQ) from Escherichia coli (strain K12).